Consider the following 366-residue polypeptide: L-idonate 5-dehydrogenase (366 aa).

Zn(2+) is bound by residues Cys56, His81, Cys111, Cys114, Cys117, Cys125, and Glu167.

This sequence belongs to the zinc-containing alcohol dehydrogenase family. Zn(2+) is required as a cofactor.

The catalysed reaction is L-idonate + NAD(+) = 5-dehydro-D-gluconate + NADH + H(+). The protein operates within carbohydrate acid metabolism; L-idonate degradation. In terms of biological role, involved in the catabolism of ascorbate to tartrate. The enzyme has no activity with NADP(+). In Vitis vinifera (Grape), this protein is L-idonate 5-dehydrogenase.